The chain runs to 134 residues: Large ribosomal subunit protein bL12 (134 aa).

Belongs to the bacterial ribosomal protein bL12 family. In terms of assembly, homodimer. Part of the ribosomal stalk of the 50S ribosomal subunit. Forms a multimeric L10(L12)X complex, where L10 forms an elongated spine to which 2 to 4 L12 dimers bind in a sequential fashion. Binds GTP-bound translation factors.

Functionally, forms part of the ribosomal stalk which helps the ribosome interact with GTP-bound translation factors. Is thus essential for accurate translation. In Chlamydia abortus (strain DSM 27085 / S26/3) (Chlamydophila abortus), this protein is Large ribosomal subunit protein bL12.